The primary structure comprises 445 residues: UPF0761 membrane protein Mlg_0521 (445 aa).

6 consecutive transmembrane segments (helical) span residues 56 to 76, 112 to 132, 152 to 172, 195 to 215, 225 to 245, and 259 to 279; these read LLALVPLLTIGLSIFAAFPVF, GLTVVGLLALMVSALLMMAAI, FMVYWTVLTLAPILMGASLGI, LLAGMPFVAETVAFTFLYAAV, ALLGGLLAAALFEAAKGGFGW, and ALAALPIFLIWLYLSWVVVLV.

This sequence belongs to the UPF0761 family.

The protein resides in the cell inner membrane. This chain is UPF0761 membrane protein Mlg_0521, found in Alkalilimnicola ehrlichii (strain ATCC BAA-1101 / DSM 17681 / MLHE-1).